The following is a 295-amino-acid chain: sn-glycerol-3-phosphate transport system permease protein UgpA (295 aa).

Residues 1–11 (MSSSRPVFRSR) are Cytoplasmic-facing. A helical membrane pass occupies residues 12–32 (WLPYLLVAPQLIITVIFFIWP). The Periplasmic segment spans residues 33-80 (AGEALWYSLQSVDPFGFSSRFVGLDNFVALFHDSYYIDSFWTTIKFST). Residues 76 to 284 (IKFSTFVTVS…FLVIVLTVMQ (209 aa)) form the ABC transmembrane type-1 domain. A helical transmembrane segment spans residues 81 to 101 (FVTVSGLLVSLFFAALVEYIV). At 102–109 (RGSRFYQT) the chain is on the cytoplasmic side. Residues 110–130 (LMLLPYAVAPAVAAVLWIFLF) traverse the membrane as a helical segment. Residues 131 to 156 (NPGRGLITHFLAEFGYDWNHAQNSGQ) lie on the Periplasmic side of the membrane. A helical transmembrane segment spans residues 157 to 177 (AMFLVVFASVWKQISYNFLFF). The Cytoplasmic segment spans residues 178–207 (YAALQSIPRSLIEAAAIDGAGPIRRFFKIA). A helical transmembrane segment spans residues 208–228 (LPLIAPVSFFLLVVNLVYAFF). The Periplasmic portion of the chain corresponds to 229-262 (DTFPVIDAATSGGPVQATTTLIYKIYREGFTGLD). The helical transmembrane segment at 263-283 (LASSAAQSVVLMFLVIVLTVM) threads the bilayer. The Cytoplasmic portion of the chain corresponds to 284–295 (QFRYVESKVRYQ).

The protein belongs to the binding-protein-dependent transport system permease family. UgpAE subfamily. As to quaternary structure, the complex is composed of two ATP-binding proteins (UgpC), two transmembrane proteins (UgpA and UgpE) and a solute-binding protein (UgpB).

The protein localises to the cell inner membrane. Its function is as follows. Part of the ABC transporter complex UgpBAEC involved in sn-glycerol-3-phosphate (G3P) import. Probably responsible for the translocation of the substrate across the membrane. In Escherichia coli O157:H7, this protein is sn-glycerol-3-phosphate transport system permease protein UgpA (ugpA).